The following is a 321-amino-acid chain: Probable pectate lyase A (321 aa).

A signal peptide spans 1-20 (MANFKLFLALAACLSGQALA). N-linked (GlcNAc...) asparagine glycosylation occurs at Asn93. Ca(2+) is bound by residues Asp134, Asp163, and Asp167. The active site involves Arg220.

Belongs to the polysaccharide lyase 1 family. It depends on Ca(2+) as a cofactor.

The protein localises to the secreted. It carries out the reaction Eliminative cleavage of (1-&gt;4)-alpha-D-galacturonan to give oligosaccharides with 4-deoxy-alpha-D-galact-4-enuronosyl groups at their non-reducing ends.. Its function is as follows. Pectinolytic enzyme consist of four classes of enzymes: pectin lyase, polygalacturonase, pectin methylesterase and rhamnogalacturonase. Among pectinolytic enzymes, pectin lyase is the most important in depolymerization of pectin, since it cleaves internal glycosidic bonds of highly methylated pectins. Favors pectate, the anion, over pectin, the methyl ester. The sequence is that of Probable pectate lyase A (plyA) from Aspergillus flavus (strain ATCC 200026 / FGSC A1120 / IAM 13836 / NRRL 3357 / JCM 12722 / SRRC 167).